The chain runs to 212 residues: Thymidylate kinase (212 aa).

Residue G10 to T17 coordinates ATP.

Belongs to the thymidylate kinase family.

It carries out the reaction dTMP + ATP = dTDP + ADP. Phosphorylation of dTMP to form dTDP in both de novo and salvage pathways of dTTP synthesis. The sequence is that of Thymidylate kinase from Baumannia cicadellinicola subsp. Homalodisca coagulata.